Consider the following 338-residue polypeptide: Short-chain dehydrogenase/reductase phmF (338 aa).

The NADP(+) site is built by L46, R71, D96, and N123. The Proton donor role is filled by S177. NADP(+) is bound by residues Y211 and K215. Y211 acts as the Proton acceptor in catalysis. K215 (lowers pKa of active site Tyr) is an active-site residue.

The protein belongs to the short-chain dehydrogenases/reductases (SDR) family.

It functions in the pathway mycotoxin biosynthesis. Functionally, short-chain dehydrogenase/reductase; part of the gene cluster that mediates the biosynthesis of the mycotoxins phomacins, leucine-derived cytochalasans with potent actin polymerization-inhibitory activities and monocot-specific antigerminative activities. The first step in the pathway is catalyzed by the hybrid PKS-NRPS phmA, assisted by the enoyl reductase phmE, that are responsible for fusion of the leucine precursor and the polyketide backbone to produce a 2-pyrrolidone intermediate. The polyketide synthase module (PKS) of phmA is responsible for the synthesis of the polyketide backbone and the downstream nonribosomal peptide synthetase (NRPS) amidates the carboxyl end of the polyketide with the leucine precursor. Because phmA lacks a designated enoylreductase (ER) domain, the required activity is provided the enoyl reductase phmE. Reduction by the hydrolyase phmG, followed by dehydration and intra-molecular Diels-Alder cyclization by the Diels-Alderase phmD then yield the required isoindolone-fused macrocycle. A number of oxidative steps catalyzed by the tailoring cytochrome P450 monooxygenase phmB, the FAD-linked oxidoreductase phmC and the short-chain dehydrogenase/reductase phmF, are further required to afford the final products, phomacin D and phomacin E. In Phaeosphaeria nodorum (strain SN15 / ATCC MYA-4574 / FGSC 10173) (Glume blotch fungus), this protein is Short-chain dehydrogenase/reductase phmF.